The following is a 195-amino-acid chain: Peptidyl-tRNA hydrolase (195 aa).

Tyrosine 17 contributes to the tRNA binding site. Histidine 22 (proton acceptor) is an active-site residue. TRNA-binding residues include phenylalanine 68, asparagine 70, and asparagine 116.

It belongs to the PTH family. As to quaternary structure, monomer.

Its subcellular location is the cytoplasm. The enzyme catalyses an N-acyl-L-alpha-aminoacyl-tRNA + H2O = an N-acyl-L-amino acid + a tRNA + H(+). Functionally, hydrolyzes ribosome-free peptidyl-tRNAs (with 1 or more amino acids incorporated), which drop off the ribosome during protein synthesis, or as a result of ribosome stalling. Its function is as follows. Catalyzes the release of premature peptidyl moieties from peptidyl-tRNA molecules trapped in stalled 50S ribosomal subunits, and thus maintains levels of free tRNAs and 50S ribosomes. The chain is Peptidyl-tRNA hydrolase from Shewanella loihica (strain ATCC BAA-1088 / PV-4).